The chain runs to 189 residues: Protein shisa-like-2A (189 aa).

The next 2 helical transmembrane spans lie at 48–68 (SFFP…LVGL) and 70–90 (TAAV…YLFI). The disordered stretch occupies residues 98–189 (LDPGLSLQTT…PTPGPHGPVP (92 aa)). Polar residues predominate over residues 140 to 171 (NTHLESNKKQTVSPTCLPQNQFMATVTASNIP).

Belongs to the shisa family.

It is found in the membrane. The protein is Protein shisa-like-2A (Shisal2a) of Mus musculus (Mouse).